The sequence spans 2346 residues: N-benzoylphenylalaninol synthetase apmA (2346 aa).

Residues 263 to 652 (ESAAQKSPDA…GRKDLQVKIR (390 aa)) are adenylation 1. The 77-residue stretch at 784–860 (MPTTTTEMTL…DMAKAMTSTR (77 aa)) folds into the Carrier 1 domain. The residue at position 821 (Ser-821) is an O-(pantetheine 4'-phosphoryl)serine. A condensation region spans residues 896–1306 (QDAYPCSPLQ…ISPQDKENLL (411 aa)). Positions 1330-1713 (SQPNAPAICA…GRKDTQVKIR (384 aa)) are adenylation 2. The Carrier 2 domain maps to 1842–1924 (SALRASEDKA…GLAAFIDAEL (83 aa)). An O-(pantetheine 4'-phosphoryl)serine modification is found at Ser-1883. Positions 1960–2311 (VTGGTGFLGT…RNVQFLVEAG (352 aa)) are reductase (R) domain.

This sequence belongs to the NRP synthetase family.

It catalyses the reaction benzoate + L-phenylalanine + 2 AH2 + 2 ATP = N-benzoyl-L-phenylalaninol + 2 A + 2 AMP + 2 diphosphate + H(+). Its pathway is secondary metabolite biosynthesis. Functionally, nonribosomal peptide synthase; part of the gene cluster that mediates the biosynthesis of asperphenamate, a rare linear amino acid ester that exhibits antitumor activity towards a number of cell lines. The structure of asperphenamate contains two subunits, N-benzoylphenylalanine and N-benzoylphenylalaninol, which are connected by an inter-molecular ester bond. The first step of asperphenamate biosynthesis is the generation of N-benzoylphenylalaninol by the nonribosomal peptide synthase apmA. Using phenylalanine and benzoic acid as substrates, apmA catalyzes amide bond formation and tethers the intermediate into the NRPS chain. Then, the terminal R domain of apmA catalyzes the reduction reaction to get the shunt product N-benzoylphenylalaninol. Subsequently, the nonribosomal peptide synthase apmB activates the same substrates as does apmA (phenylalanine and benzoic acid) to produce N-benzoylphenylalanine before condensing N-benzoylphenylalanine and N-benzoylphenylalaninol to release asperphenamate. The chain is N-benzoylphenylalaninol synthetase apmA from Penicillium brevicompactum.